The sequence spans 661 residues: Probable urea active transporter 3 (661 aa).

15 helical membrane-spanning segments follow: residues 13–33, 56–76, 86–106, 132–152, 165–185, 197–217, 251–271, 288–308, 352–372, 397–417, 419–439, 454–474, 495–515, 556–576, and 591–611; these read GIVI…TYVL, GLIS…LTSA, GSMW…VIAL, AVFL…LLLG, VVAA…SGGL, VIVY…SVHI, AVFV…CDPS, YFAG…AAAL, AGVL…LVAF, VTHV…VLFN, IGIT…PAVF, GMII…VGSC, VGNF…SYFF, IGIF…PLPM, and WIIV…FYPL.

This sequence belongs to the sodium:solute symporter (SSF) (TC 2.A.21) family.

It is found in the membrane. The protein resides in the golgi apparatus membrane. Functionally, involved in active transport of urea. This Schizosaccharomyces pombe (strain 972 / ATCC 24843) (Fission yeast) protein is Probable urea active transporter 3 (dur3-3).